The sequence spans 1293 residues: Galactose/N-acetyl-D-galactosamine lectin heavy subunit 1 (1293 aa).

Positions 1-15 are cleaved as a signal peptide; the sequence is MKLLLLNILLLCCLA. Residues 16–1234 are Extracellular-facing; it reads DKLNEFSADI…NNVGAIAAAT (1219 aa). Asn95, Asn198, Asn234, Asn261, Asn337, Asn377, Asn390, Asn468, Asn487, Asn643, Asn659, Asn890, Asn992, Asn1138, Asn1204, and Asn1214 each carry an N-linked (GlcNAc...) asparagine glycan. The chain crosses the membrane as a helical span at residues 1235–1255; it reads TVAVVVVAVVVALIVVSIGLF. Topologically, residues 1256-1293 are cytoplasmic; sequence KTYQLVSSAMKNAITITNENAEYVGADNEATNAATFNG.

Heterodimer composed of a 170 kDa heavy subunit (hgl) and a 31/35 kDa light subunit (lgl); disulfide-linked. In terms of processing, N-glycosylated.

The protein resides in the cell membrane. In terms of biological role, lectin which binds galactose and N-acetyl-D-galactosamine of host glycoproteins and thus mediates adhesion to host cells. Mediates adherence to host colonic mucins, an essential step for pathogenic tissue invasion. In Entamoeba histolytica (strain ATCC 30459 / HM-1:IMSS / ABRM), this protein is Galactose/N-acetyl-D-galactosamine lectin heavy subunit 1.